A 503-amino-acid polypeptide reads, in one-letter code: Probable zinc metalloprotease UREG_01421 (503 aa).

Residues 1-24 (MHSLSSALAGSTFVLLFLCLLASA) form the signal peptide. An N-linked (GlcNAc...) asparagine glycan is attached at N105. The Zn(2+) site is built by H176, D196, and E232. A glycan (N-linked (GlcNAc...) asparagine) is linked at N247. Residue D259 participates in Zn(2+) binding. Residues 416–503 (MPRNVRVSTR…RGVAVLPFPA (88 aa)) enclose the Fibronectin type-III domain. N429 carries N-linked (GlcNAc...) asparagine glycosylation.

Belongs to the peptidase M28 family. M28B subfamily. The cofactor is Zn(2+).

The protein resides in the secreted. The protein is Probable zinc metalloprotease UREG_01421 of Uncinocarpus reesii (strain UAMH 1704).